Reading from the N-terminus, the 629-residue chain is 1-deoxy-D-xylulose-5-phosphate synthase (629 aa).

Residues His-72 and 113-115 (GHS) each bind thiamine diphosphate. A Mg(2+)-binding site is contributed by Asp-144. Residues 145-146 (GA), Asn-173, Tyr-284, and Glu-366 each bind thiamine diphosphate. Mg(2+) is bound at residue Asn-173.

Belongs to the transketolase family. DXPS subfamily. In terms of assembly, homodimer. Mg(2+) serves as cofactor. The cofactor is thiamine diphosphate.

It carries out the reaction D-glyceraldehyde 3-phosphate + pyruvate + H(+) = 1-deoxy-D-xylulose 5-phosphate + CO2. Its pathway is metabolic intermediate biosynthesis; 1-deoxy-D-xylulose 5-phosphate biosynthesis; 1-deoxy-D-xylulose 5-phosphate from D-glyceraldehyde 3-phosphate and pyruvate: step 1/1. Catalyzes the acyloin condensation reaction between C atoms 2 and 3 of pyruvate and glyceraldehyde 3-phosphate to yield 1-deoxy-D-xylulose-5-phosphate (DXP). This chain is 1-deoxy-D-xylulose-5-phosphate synthase, found in Halalkalibacterium halodurans (strain ATCC BAA-125 / DSM 18197 / FERM 7344 / JCM 9153 / C-125) (Bacillus halodurans).